Reading from the N-terminus, the 241-residue chain is Parkin coregulated gene protein homolog (241 aa).

In terms of assembly, microtubule inner protein component of sperm flagellar doublet microtubules. Forms a large molecular chaperone complex containing heat shock proteins 70 and 90 and chaperonin components. Interacts with STIP1, PRKN, GPR37, HSPA8, TCP1/CCT1, CCT2, CCT3, CCT4, CCT5, CCT6A, CCT7 and CCT8. Interacts with MEIG1.

The protein localises to the cytoplasm. Its subcellular location is the cytoskeleton. It localises to the cilium axoneme. It is found in the flagellum axoneme. In terms of biological role, microtubule inner protein (MIP) part of the dynein-decorated doublet microtubules (DMTs) in cilia axoneme, which is required for motile cilia beating. Suppresses cell death induced by accumulation of unfolded Pael receptor (Pael-R, a substrate of Parkin). Facilitates the formation of inclusions consisting of Pael-R, molecular chaperones, protein degradation molecules and itself when proteasome is inhibited. May play an important role in the formation of Lewy bodies and protection of dopaminergic neurons against Parkinson disease. This is Parkin coregulated gene protein homolog (Pacrg) from Mus musculus (Mouse).